The primary structure comprises 389 residues: Vacuolar protein sorting-associated protein vts1 (389 aa).

The disordered stretch occupies residues N149 to P335. Composition is skewed to polar residues over residues T156 to T177, T184 to P219, and S227 to K282. The span at T294–S306 shows a compositional bias: low complexity. The segment covering A308–S334 has biased composition (polar residues).

This sequence belongs to the VTA1 family. As to quaternary structure, homodimer (in cytoplasm).

It is found in the cytoplasm. The protein resides in the endosome membrane. Its function is as follows. Has a role in the formation of the multivesicular body (MVB). Required for the sorting of lipids to form intralumenal vesicles and for fluid-phase transport to the vacuole. Required for sorting several plasma membrane proteins into the MVB. The chain is Vacuolar protein sorting-associated protein vts1 (vts1) from Schizosaccharomyces pombe (strain 972 / ATCC 24843) (Fission yeast).